A 244-amino-acid polypeptide reads, in one-letter code: tRNA pseudouridine synthase A (244 aa).

Catalysis depends on D52, which acts as the Nucleophile. Residue Y110 coordinates substrate.

Belongs to the tRNA pseudouridine synthase TruA family. In terms of assembly, homodimer.

The catalysed reaction is uridine(38/39/40) in tRNA = pseudouridine(38/39/40) in tRNA. Formation of pseudouridine at positions 38, 39 and 40 in the anticodon stem and loop of transfer RNAs. This chain is tRNA pseudouridine synthase A, found in Geotalea uraniireducens (strain Rf4) (Geobacter uraniireducens).